Reading from the N-terminus, the 142-residue chain is Hemoglobin subunit beta-2 (142 aa).

The 141-residue stretch at 2–142 (SLTDEEKHLI…VTEALSCQYH (141 aa)) folds into the Globin domain. Residues His59 and His88 each coordinate heme b.

Belongs to the globin family. Heterotetramer of two alpha chains and two beta chains. Red blood cells.

In terms of biological role, involved in oxygen transport from the lung to the various peripheral tissues. This is Hemoglobin subunit beta-2 (HBB2) from Torpedo marmorata (Marbled electric ray).